The chain runs to 349 residues: E3 ubiquitin-protein ligase SINA-like 10 (349 aa).

The segment at 1–77 (MARFSVCGGD…STSDDSDREV (77 aa)) is disordered. Residues 113 to 149 (CPICCEPLKIPIFQCDNGHLACTLCCTKVRNRCPSCT) form an RING-type; degenerate zinc finger. Positions 163 to 344 (VIEASRVSCL…NLQIWIGHGR (182 aa)) are SBD. The segment at 166–224 (ASRVSCLNAKYGCKESTSYGNRFSHEQVCVFTPCSCPILDCHYTGYYKDLNNHVRAEHK) adopts an SIAH-type zinc-finger fold. Residues Cys171, Cys178, His190, Cys194, Cys201, Cys206, His218, and His223 each coordinate Zn(2+).

The protein belongs to the SINA (Seven in absentia) family.

It catalyses the reaction S-ubiquitinyl-[E2 ubiquitin-conjugating enzyme]-L-cysteine + [acceptor protein]-L-lysine = [E2 ubiquitin-conjugating enzyme]-L-cysteine + N(6)-ubiquitinyl-[acceptor protein]-L-lysine.. Its pathway is protein modification; protein ubiquitination. Functionally, E3 ubiquitin-protein ligase that mediates ubiquitination and subsequent proteasomal degradation of target proteins. E3 ubiquitin ligases accept ubiquitin from an E2 ubiquitin-conjugating enzyme in the form of a thioester and then directly transfers the ubiquitin to targeted substrates. It probably triggers the ubiquitin-mediated degradation of different substrates. This chain is E3 ubiquitin-protein ligase SINA-like 10, found in Arabidopsis thaliana (Mouse-ear cress).